The sequence spans 187 residues: Threonylcarbamoyl-AMP synthase (187 aa).

The 185-residue stretch at 3-187 (NSELLKIIWA…LLNGYLYRKR (185 aa)) folds into the YrdC-like domain.

It belongs to the SUA5 family. TsaC subfamily.

Its subcellular location is the cytoplasm. It catalyses the reaction L-threonine + hydrogencarbonate + ATP = L-threonylcarbamoyladenylate + diphosphate + H2O. In terms of biological role, required for the formation of a threonylcarbamoyl group on adenosine at position 37 (t(6)A37) in tRNAs that read codons beginning with adenine. Catalyzes the conversion of L-threonine, HCO(3)(-)/CO(2) and ATP to give threonylcarbamoyl-AMP (TC-AMP) as the acyladenylate intermediate, with the release of diphosphate. This Riesia pediculicola (strain USDA) protein is Threonylcarbamoyl-AMP synthase.